A 397-amino-acid chain; its full sequence is Lysophospholipid transporter LplT (397 aa).

Topologically, residues 1-17 are periplasmic; that stretch reads MSESVHTNTSLWSKGMK. The helical transmembrane segment at 18-38 threads the bilayer; sequence AVIVAQFLSAFGDNALLFATL. At 39-52 the chain is on the cytoplasmic side; the sequence is ALLKAQFYPEWSQP. Residues 53 to 73 form a helical membrane-spanning segment; it reads ILQMVFVGAYILFAPFVGQVA. At 74–90 the chain is on the periplasmic side; sequence DSFAKGRVMMFANGLKL. A helical membrane pass occupies residues 91-111; sequence LGAASICFGINPFLGYTLVGV. The Cytoplasmic portion of the chain corresponds to 112 to 144; the sequence is GAAAYSPAKYGILGELTTGSKLVKANGLMEAST. A helical transmembrane segment spans residues 145–165; that stretch reads IAAILLGSVAGGVLADWHVLV. A topological domain (periplasmic) is located at residue Ala-166. A helical membrane pass occupies residues 167-187; sequence LAACALAYGGAVVANIYIPKL. Residues 188-226 are Cytoplasmic-facing; it reads AAARPGQSWNLINMTRSFLNACTSLWRNGETRFSLVGTS. Residues 227 to 247 form a helical membrane-spanning segment; the sequence is LFWGAGVTLRFLLVLWVPVAL. At 248-256 the chain is on the periplasmic side; sequence GITDNATPT. A helical transmembrane segment spans residues 257–277; sequence YLNAMVAIGIVVGAGAAAKLV. Over 278 to 280 the chain is Cytoplasmic; the sequence is TLE. A helical membrane pass occupies residues 281–301; the sequence is TMSRCMPAGILIGVVVLIFSL. Residues 302-304 lie on the Periplasmic side of the membrane; that stretch reads QHE. Residues 305–325 form a helical membrane-spanning segment; it reads LLPAYALLMLIGVMGGFFVVP. Over 326–343 the chain is Cytoplasmic; sequence LNALLQERGKKSVGAGNA. A helical transmembrane segment spans residues 344–364; the sequence is IAVQNLGENSAMLLMLGIYSL. At 365–366 the chain is on the periplasmic side; sequence AV. The chain crosses the membrane as a helical span at residues 367–387; that stretch reads MVGIPVVPIGIGFGALFALAI. Residues 388–397 are Cytoplasmic-facing; that stretch reads TALWIWQRRH.

The protein belongs to the major facilitator superfamily. LplT (TC 2.A.1.42) family.

It is found in the cell inner membrane. Its function is as follows. Catalyzes the facilitated diffusion of 2-acyl-glycero-3-phosphoethanolamine (2-acyl-GPE) into the cell. The chain is Lysophospholipid transporter LplT from Shigella sonnei (strain Ss046).